A 344-amino-acid polypeptide reads, in one-letter code: MASSRVDTINLRIWLVSIICAALSFINVTVHLIAINFPNLGFPCAYFEINDLKAVNLSANNEIYQMTHQLYINPVQIICYVLIMAILFLLIIIYYIVCCAKVFSSNKTSNVNQTTRDITWMGDTSSCFQFILIMDTFQLFVTALSFRLVALGAFAYSIFFVCFTTFNVTLITQFQSADKSFFAFQKIHPNLKGTVQFKTVVINLSELMLGYSTMFLGITTCLGVGNSIYIRSITVAFSSINTFLVMACIYSIVIEAVLVRYVKPLFGYYVGMFCGAVGLSFPILQYETFFESEWSTGLIINLSVVAIISIGFIICRLVRYLVKKKRRYKQLLNAESSSLMDENE.

Topologically, residues 1–12 are intravirion; the sequence is MASSRVDTINLR. Residues 13–33 form a helical membrane-spanning segment; the sequence is IWLVSIICAALSFINVTVHLI. Residues 34–76 lie on the Virion surface side of the membrane; the sequence is AINFPNLGFPCAYFEINDLKAVNLSANNEIYQMTHQLYINPVQ. The helical transmembrane segment at 77–97 threads the bilayer; that stretch reads IICYVLIMAILFLLIIIYYIV. Over 98-125 the chain is Intravirion; the sequence is CCAKVFSSNKTSNVNQTTRDITWMGDTS. The chain crosses the membrane as a helical span at residues 126–146; it reads SCFQFILIMDTFQLFVTALSF. Arg-147 is a topological domain (virion surface). Residues 148-168 form a helical membrane-spanning segment; it reads LVALGAFAYSIFFVCFTTFNV. Topologically, residues 169 to 203 are intravirion; sequence TLITQFQSADKSFFAFQKIHPNLKGTVQFKTVVIN. The helical transmembrane segment at 204–224 threads the bilayer; the sequence is LSELMLGYSTMFLGITTCLGV. The Virion surface portion of the chain corresponds to 225–238; the sequence is GNSIYIRSITVAFS. A helical membrane pass occupies residues 239–259; the sequence is SINTFLVMACIYSIVIEAVLV. Residues 260–263 are Intravirion-facing; the sequence is RYVK. Residues 264 to 284 form a helical membrane-spanning segment; that stretch reads PLFGYYVGMFCGAVGLSFPIL. Over 285–293 the chain is Virion surface; it reads QYETFFESE. Residues 294 to 314 traverse the membrane as a helical segment; the sequence is WSTGLIINLSVVAIISIGFII. Residues 315–344 are Intravirion-facing; sequence CRLVRYLVKKKRRYKQLLNAESSSLMDENE.

It belongs to the herpesviridae glycoprotein M family. In terms of assembly, interacts (via N-terminus) with gN (via N-terminus). The gM-gN heterodimer forms the gCII complex.

It is found in the virion membrane. It localises to the host Golgi apparatus. The protein localises to the host trans-Golgi network. The protein resides in the host endosome membrane. Its subcellular location is the host nucleus inner membrane. Functionally, envelope glycoprotein important for virion assembly and egress. Plays a role in the correct incorporation of gH-gL into virion membrane. Directs the glycoprotein N (gN) to the host trans-Golgi network. The polypeptide is Envelope glycoprotein M (Homo sapiens (Human)).